The sequence spans 428 residues: Sporulation kinase B (428 aa).

Topologically, residues 1–6 (MEILKD) are cytoplasmic. Residues 7–27 (YLLHICFILFPILLYQVFWLG) traverse the membrane as a helical segment. Topologically, residues 28–37 (KPAILVPKIN) are extracellular. Residues 38–58 (SGLVTLFACGASVLCIIFPIH) form a helical membrane-spanning segment. The Cytoplasmic portion of the chain corresponds to 59–68 (EMDYIQYGLQ). Residues 69–89 (MIPVIICLFYISTASGLTVAA) traverse the membrane as a helical segment. The Extracellular portion of the chain corresponds to 90–99 (SVLCFELLFY). The helical transmembrane segment at 100–120 (EPSAMFVFTLLPFLIIIPILF) threads the bilayer. Topologically, residues 121 to 132 (QKKWPFMSKAKK) are cytoplasmic. A helical membrane pass occupies residues 133–153 (LLLSLLISCVEIFLFFASSWI). Residues 154–166 (LSALNILNFQKSG) are Extracellular-facing. The chain crosses the membrane as a helical span at residues 167 to 187 (IFVYEAAVSGLFRSSVLLLSI). The Cytoplasmic portion of the chain corresponds to 188 to 428 (YIIESIAENI…TIKLPADLPH (241 aa)). In terms of domain architecture, Histidine kinase spans 218-426 (SVAHEVRNPL…TVTIKLPADL (209 aa)). Phosphohistidine; by autocatalysis is present on His221.

The protein localises to the cell membrane. The enzyme catalyses ATP + protein L-histidine = ADP + protein N-phospho-L-histidine.. Phosphorylates the sporulation-regulatory proteins spo0A and spo0F. Spo0F is required for the KinB activity. The protein is Sporulation kinase B (kinB) of Bacillus subtilis (strain 168).